We begin with the raw amino-acid sequence, 91 residues long: Cell division protein FtsB (91 aa).

Residues Met-1–Trp-3 are Cytoplasmic-facing. A helical membrane pass occupies residues Leu-4–Val-21. The Periplasmic segment spans residues Gly-22–Gln-91. A coiled-coil region spans residues Glu-23–Gly-63.

The protein belongs to the FtsB family. As to quaternary structure, part of a complex composed of FtsB, FtsL and FtsQ.

It is found in the cell inner membrane. In terms of biological role, essential cell division protein. May link together the upstream cell division proteins, which are predominantly cytoplasmic, with the downstream cell division proteins, which are predominantly periplasmic. In Teredinibacter turnerae (strain ATCC 39867 / T7901), this protein is Cell division protein FtsB.